The chain runs to 193 residues: Hypoxanthine/guanine phosphoribosyltransferase (193 aa).

It belongs to the purine/pyrimidine phosphoribosyltransferase family. Archaeal HPRT subfamily. In terms of assembly, homodimer.

It localises to the cytoplasm. It catalyses the reaction IMP + diphosphate = hypoxanthine + 5-phospho-alpha-D-ribose 1-diphosphate. The enzyme catalyses GMP + diphosphate = guanine + 5-phospho-alpha-D-ribose 1-diphosphate. Its pathway is purine metabolism; IMP biosynthesis via salvage pathway; IMP from hypoxanthine: step 1/1. In terms of biological role, catalyzes a salvage reaction resulting in the formation of IMP that is energically less costly than de novo synthesis. The polypeptide is Hypoxanthine/guanine phosphoribosyltransferase (Methanothermobacter thermautotrophicus (strain ATCC 29096 / DSM 1053 / JCM 10044 / NBRC 100330 / Delta H) (Methanobacterium thermoautotrophicum)).